The chain runs to 959 residues: Glycine dehydrogenase (decarboxylating) (959 aa).

Lys-707 is subject to N6-(pyridoxal phosphate)lysine.

Belongs to the GcvP family. In terms of assembly, the glycine cleavage system is composed of four proteins: P, T, L and H. It depends on pyridoxal 5'-phosphate as a cofactor.

The enzyme catalyses N(6)-[(R)-lipoyl]-L-lysyl-[glycine-cleavage complex H protein] + glycine + H(+) = N(6)-[(R)-S(8)-aminomethyldihydrolipoyl]-L-lysyl-[glycine-cleavage complex H protein] + CO2. Its function is as follows. The glycine cleavage system catalyzes the degradation of glycine. The P protein binds the alpha-amino group of glycine through its pyridoxal phosphate cofactor; CO(2) is released and the remaining methylamine moiety is then transferred to the lipoamide cofactor of the H protein. The chain is Glycine dehydrogenase (decarboxylating) from Photobacterium profundum (strain SS9).